A 472-amino-acid polypeptide reads, in one-letter code: Ras-GEF domain-containing family member 1B (472 aa).

An N-terminal Ras-GEF domain is found at 34 to 164 (QDNNLLSGSL…IIQNLIRKLA (131 aa)). Positions 204–452 (DPYTVAQQLT…YLASYESEGP (249 aa)) constitute a Ras-GEF domain.

In terms of biological role, guanine nucleotide exchange factor (GEF) with specificity for rap2a and other Ras family proteins (in vitro). The chain is Ras-GEF domain-containing family member 1B (rasgef1b) from Xenopus tropicalis (Western clawed frog).